The chain runs to 316 residues: 4-hydroxy-3-methylbut-2-enyl diphosphate reductase (316 aa).

A [4Fe-4S] cluster-binding site is contributed by cysteine 12. (2E)-4-hydroxy-3-methylbut-2-enyl diphosphate is bound by residues histidine 41 and histidine 74. 2 residues coordinate dimethylallyl diphosphate: histidine 41 and histidine 74. Isopentenyl diphosphate-binding residues include histidine 41 and histidine 74. Residue cysteine 96 participates in [4Fe-4S] cluster binding. Residue histidine 124 participates in (2E)-4-hydroxy-3-methylbut-2-enyl diphosphate binding. Histidine 124 contacts dimethylallyl diphosphate. Histidine 124 lines the isopentenyl diphosphate pocket. Catalysis depends on glutamate 126, which acts as the Proton donor. A (2E)-4-hydroxy-3-methylbut-2-enyl diphosphate-binding site is contributed by threonine 167. Cysteine 197 contributes to the [4Fe-4S] cluster binding site. Residues serine 225, serine 226, asparagine 227, and serine 269 each contribute to the (2E)-4-hydroxy-3-methylbut-2-enyl diphosphate site. Residues serine 225, serine 226, asparagine 227, and serine 269 each coordinate dimethylallyl diphosphate. Positions 225, 226, 227, and 269 each coordinate isopentenyl diphosphate.

It belongs to the IspH family. As to quaternary structure, homodimer. Requires [4Fe-4S] cluster as cofactor.

The catalysed reaction is isopentenyl diphosphate + 2 oxidized [2Fe-2S]-[ferredoxin] + H2O = (2E)-4-hydroxy-3-methylbut-2-enyl diphosphate + 2 reduced [2Fe-2S]-[ferredoxin] + 2 H(+). It carries out the reaction dimethylallyl diphosphate + 2 oxidized [2Fe-2S]-[ferredoxin] + H2O = (2E)-4-hydroxy-3-methylbut-2-enyl diphosphate + 2 reduced [2Fe-2S]-[ferredoxin] + 2 H(+). It functions in the pathway isoprenoid biosynthesis; dimethylallyl diphosphate biosynthesis; dimethylallyl diphosphate from (2E)-4-hydroxy-3-methylbutenyl diphosphate: step 1/1. It participates in isoprenoid biosynthesis; isopentenyl diphosphate biosynthesis via DXP pathway; isopentenyl diphosphate from 1-deoxy-D-xylulose 5-phosphate: step 6/6. In terms of biological role, catalyzes the conversion of 1-hydroxy-2-methyl-2-(E)-butenyl 4-diphosphate (HMBPP) into a mixture of isopentenyl diphosphate (IPP) and dimethylallyl diphosphate (DMAPP). Acts in the terminal step of the DOXP/MEP pathway for isoprenoid precursor biosynthesis. The protein is 4-hydroxy-3-methylbut-2-enyl diphosphate reductase of Salmonella schwarzengrund (strain CVM19633).